The following is a 121-amino-acid chain: Large ribosomal subunit protein uL14 (121 aa).

It belongs to the universal ribosomal protein uL14 family. As to quaternary structure, part of the 50S ribosomal subunit. Forms a cluster with proteins L3 and L19. In the 70S ribosome, L14 and L19 interact and together make contacts with the 16S rRNA in bridges B5 and B8.

Its function is as follows. Binds to 23S rRNA. Forms part of two intersubunit bridges in the 70S ribosome. The polypeptide is Large ribosomal subunit protein uL14 (Synechococcus sp. (strain RCC307)).